We begin with the raw amino-acid sequence, 316 residues long: Ribosomal RNA small subunit methyltransferase H (316 aa).

S-adenosyl-L-methionine is bound by residues 35 to 37 (AGH), aspartate 55, phenylalanine 84, aspartate 105, and glutamine 112.

The protein belongs to the methyltransferase superfamily. RsmH family.

The protein resides in the cytoplasm. The catalysed reaction is cytidine(1402) in 16S rRNA + S-adenosyl-L-methionine = N(4)-methylcytidine(1402) in 16S rRNA + S-adenosyl-L-homocysteine + H(+). Specifically methylates the N4 position of cytidine in position 1402 (C1402) of 16S rRNA. This is Ribosomal RNA small subunit methyltransferase H from Streptococcus pneumoniae (strain P1031).